The following is a 379-amino-acid chain: Serpin B5 (379 aa).

N-linked (GlcNAc...) asparagine glycosylation is found at Asn-133, Asn-176, and Asn-361.

It belongs to the serpin family. Ov-serpin subfamily.

Its subcellular location is the secreted. The protein localises to the extracellular space. Functionally, may not exhibit serine protease inhibitory activity. This is Serpin B5 (serpinb5) from Xenopus tropicalis (Western clawed frog).